Here is a 783-residue protein sequence, read N- to C-terminus: Protein phosphatase 2C 29 (783 aa).

The tract at residues 151–194 (SFSALPLQPGPDRSGLFMSGPIERGATSGPLDPPAGEISRSNSA) is disordered. Serine 199 carries the post-translational modification Phosphoserine. Positions 260-770 (SSGENDLQWA…DDCTVLVIAL (511 aa)) constitute a PPM-type phosphatase domain. Residues aspartate 295 and glycine 296 each contribute to the Mn(2+) site. The interval 555 to 595 (ETGESVETAERVEERRNDLDRDDGNKEPLVVDSSDSTVNNE) is disordered. Over residues 562–580 (TAERVEERRNDLDRDDGNK) the composition is skewed to basic and acidic residues. Residues aspartate 701 and aspartate 761 each coordinate Mn(2+).

It belongs to the PP2C family. Mg(2+) is required as a cofactor. Requires Mn(2+) as cofactor. In terms of tissue distribution, expressed in roots, leaves, stems, inflorescences, flowers and developing vascular tissue.

The protein resides in the nucleus. It carries out the reaction O-phospho-L-seryl-[protein] + H2O = L-seryl-[protein] + phosphate. The catalysed reaction is O-phospho-L-threonyl-[protein] + H2O = L-threonyl-[protein] + phosphate. In terms of biological role, involved in the regulation of pedicel length and of CLAVATA pathways controlling stem cell identity at shoot and flower meristems. The polypeptide is Protein phosphatase 2C 29 (PLL1) (Arabidopsis thaliana (Mouse-ear cress)).